Consider the following 188-residue polypeptide: Elongation factor P (188 aa).

This sequence belongs to the elongation factor P family.

The protein localises to the cytoplasm. The protein operates within protein biosynthesis; polypeptide chain elongation. In terms of biological role, involved in peptide bond synthesis. Stimulates efficient translation and peptide-bond synthesis on native or reconstituted 70S ribosomes in vitro. Probably functions indirectly by altering the affinity of the ribosome for aminoacyl-tRNA, thus increasing their reactivity as acceptors for peptidyl transferase. The sequence is that of Elongation factor P from Gemmatimonas aurantiaca (strain DSM 14586 / JCM 11422 / NBRC 100505 / T-27).